The chain runs to 495 residues: Protein YhjJ (495 aa).

Residues 1–24 (MQGTKIRLLAGSLLMLASAGYVQA) form the signal peptide.

This sequence belongs to the peptidase M16 family.

The protein localises to the periplasm. The sequence is that of Protein YhjJ (yhjJ) from Salmonella typhimurium (strain LT2 / SGSC1412 / ATCC 700720).